Reading from the N-terminus, the 765-residue chain is Membrane metallo-endopeptidase-like 1 (765 aa).

Topologically, residues 1 to 19 (MVERAGWCRKKSPGFVEYG) are cytoplasmic. Residues 20 to 40 (LMVLLLLLLGAIVTLGVFYSI) traverse the membrane as a helical; Signal-anchor for type II membrane protein segment. Topologically, residues 41–765 (GKQLPLLTSL…MHPMKRCRIW (725 aa)) are lumenal. Residues 74 to 765 (ICTTPSCVIA…MHPMKRCRIW (692 aa)) form the Peptidase M13 domain. Intrachain disulfides connect cysteine 75–cysteine 80, cysteine 98–cysteine 750, cysteine 106–cysteine 710, cysteine 161–cysteine 425, and cysteine 636–cysteine 762. Residue arginine 121 coordinates a peptide. N-linked (GlcNAc...) asparagine glycosylation is found at asparagine 163, asparagine 279, asparagine 303, and asparagine 336. Residues 523–549 (FENGLQNLKNNAQRSLKKLREKVDQNL) are a coiled coil. Zn(2+) is bound at residue histidine 599. Glutamate 600 is a catalytic residue. Zn(2+) is bound by residues histidine 603 and glutamate 662. The active-site Proton donor is the aspartate 666. N-linked (GlcNAc...) asparagine glycosylation occurs at asparagine 694.

It belongs to the peptidase M13 family. The cofactor is Zn(2+). In terms of processing, N-glycosylated. Highly expressed in testis. Also expressed in ovary. Weakly or not expressed in brain, lung, heart, liver, kidney, adrenal gland and intestine.

The protein resides in the membrane. It is found in the secreted. The catalysed reaction is Preferential cleavage of polypeptides between hydrophobic residues, particularly with Phe or Tyr at P1'.. Inhibited by thiorphan and phosphoramidon. In terms of biological role, metalloprotease involved in sperm function, possibly by modulating the processes of fertilization and early embryonic development. Degrades a broad variety of small peptides with a preference for peptides shorter than 3 kDa containing neutral bulky aliphatic or aromatic amino acid residues. Shares the same substrate specificity with MME and cleaves peptides at the same amide bond. This chain is Membrane metallo-endopeptidase-like 1 (Mmel1), found in Mus musculus (Mouse).